A 435-amino-acid chain; its full sequence is tRNA modification GTPase MnmE (435 aa).

3 residues coordinate (6S)-5-formyl-5,6,7,8-tetrahydrofolate: arginine 20, glutamate 77, and lysine 117. Residues 214 to 359 enclose the TrmE-type G domain; that stretch reads GIKVVIVGVP…FLKEIESFCL (146 aa). GTP is bound by residues 224–229, 243–249, and 268–271; these read NSGKSS, TEEEGTT, and DTAG. 2 residues coordinate Mg(2+): serine 228 and threonine 249. Position 435 (lysine 435) interacts with (6S)-5-formyl-5,6,7,8-tetrahydrofolate.

It belongs to the TRAFAC class TrmE-Era-EngA-EngB-Septin-like GTPase superfamily. TrmE GTPase family. Homodimer. Heterotetramer of two MnmE and two MnmG subunits. K(+) serves as cofactor.

It is found in the cytoplasm. Exhibits a very high intrinsic GTPase hydrolysis rate. Involved in the addition of a carboxymethylaminomethyl (cmnm) group at the wobble position (U34) of certain tRNAs, forming tRNA-cmnm(5)s(2)U34. The polypeptide is tRNA modification GTPase MnmE (Bartonella bacilliformis (strain ATCC 35685 / KC583 / Herrer 020/F12,63)).